Here is a 137-residue protein sequence, read N- to C-terminus: uncharacterized protein (137 aa).

This sequence belongs to the DCC thiol-disulfide oxidoreductase family.

This is an uncharacterized protein from Bacillus subtilis (strain 168).